A 491-amino-acid polypeptide reads, in one-letter code: UDP-N-acetylmuramate--L-alanine ligase (491 aa).

Residue 115–121 (GTHGKTT) participates in ATP binding.

This sequence belongs to the MurCDEF family.

It localises to the cytoplasm. The enzyme catalyses UDP-N-acetyl-alpha-D-muramate + L-alanine + ATP = UDP-N-acetyl-alpha-D-muramoyl-L-alanine + ADP + phosphate + H(+). It participates in cell wall biogenesis; peptidoglycan biosynthesis. Functionally, cell wall formation. In Parvibaculum lavamentivorans (strain DS-1 / DSM 13023 / NCIMB 13966), this protein is UDP-N-acetylmuramate--L-alanine ligase.